Reading from the N-terminus, the 431-residue chain is Chaperone SurA (431 aa).

The signal sequence occupies residues 1-22 (MNLKKLLTSAVLSISLCQSAFA). 2 consecutive PpiC domains span residues 173–274 (AEEY…KVQD) and 283–383 (TTET…QLLD).

The protein localises to the periplasm. The enzyme catalyses [protein]-peptidylproline (omega=180) = [protein]-peptidylproline (omega=0). In terms of biological role, chaperone involved in the correct folding and assembly of outer membrane proteins. Recognizes specific patterns of aromatic residues and the orientation of their side chains, which are found more frequently in integral outer membrane proteins. May act in both early periplasmic and late outer membrane-associated steps of protein maturation. The polypeptide is Chaperone SurA (Pseudoalteromonas translucida (strain TAC 125)).